A 289-amino-acid polypeptide reads, in one-letter code: MPITSAASRLGTTAYQTNPIELRPNWTAEDAKIVIQAVYRQVLGNDYLMQSERLTSLESLLTNGKLSVRDFVRAVAKSELYKTKFLYPHFQTRVIELNFKHLLGRAPYDESEVIEHLDRDQNQGFDADIDSYIDSAEYDTYFGDSIVPYYRDLVTTGVGQRTVGFTRSFRLYRGYANSDRSQLAGSSSRLASDLATNSATAIIAPSGGTQGWSYLPSKQGTAPSRTFGRSSQGSTPRLYRIEVTGISLPRYPKVRRSNKEFIVPYEQLSSTLQQINKLGGKVASITFAQ.

Positions 2 to 180 constitute a PBS-linker domain; it reads PITSAASRLG…LYRGYANSDR (179 aa). Residues 213–233 are disordered; sequence SYLPSKQGTAPSRTFGRSSQG. The segment covering 216 to 233 has biased composition (polar residues); sequence PSKQGTAPSRTFGRSSQG. Positions 236–288 constitute a CpcD-like domain; sequence PRLYRIEVTGISLPRYPKVRRSNKEFIVPYEQLSSTLQQINKLGGKVASITFA.

It belongs to the phycobilisome linker protein family.

It is found in the cellular thylakoid membrane. In terms of biological role, rod linker protein, associated with phycocyanin. Linker polypeptides determine the state of aggregation and the location of the disk-shaped phycobiliprotein units within the phycobilisome and modulate their spectroscopic properties in order to mediate a directed and optimal energy transfer. The chain is Phycobilisome 39 kDa linker polypeptide, phycocyanin-associated, rod (cpcI2) from Microchaete diplosiphon (Fremyella diplosiphon).